Reading from the N-terminus, the 326-residue chain is MSRSLVFFFLFLVLVVPCLSHGTGGDHDDDEASHVKSSDLKSKSLISVKIACLVIIFVLTFISGVSPYFLKWSQGFLVLGTQFAGGVFLATALMHFLSDADETFRGLLTAEGESEPSPAYPFAYMLACAGFMLTMLADSVIAHIYSKTQNDLELQGEDKSNQRSATTETSIGDSILLIVALCFHSVFEGIAIGISETKSDAWRALWTITLHKIFAAIAMGIALLRMIPDRPLFSSITYSFAFAISSPIGVAIGIVIDATTQGSIADWIFALSMSLACGVFVYVSVNHLLAKGYRPNKKVHVDEPRYKFLAVLFGVVVIAIVMIWDT.

Positions 1-20 (MSRSLVFFFLFLVLVVPCLS) are cleaved as a signal peptide. The Extracellular segment spans residues 21 to 49 (HGTGGDHDDDEASHVKSSDLKSKSLISVK). A helical membrane pass occupies residues 50–70 (IACLVIIFVLTFISGVSPYFL). Residues 71-75 (KWSQG) are Cytoplasmic-facing. The chain crosses the membrane as a helical span at residues 76–96 (FLVLGTQFAGGVFLATALMHF). Residues 97 to 121 (LSDADETFRGLLTAEGESEPSPAYP) are Extracellular-facing. A helical transmembrane segment spans residues 122–142 (FAYMLACAGFMLTMLADSVIA). Residues 143 to 174 (HIYSKTQNDLELQGEDKSNQRSATTETSIGDS) lie on the Cytoplasmic side of the membrane. Residues 175–195 (ILLIVALCFHSVFEGIAIGIS) form a helical membrane-spanning segment. Over 196-203 (ETKSDAWR) the chain is Extracellular. Residues 204–224 (ALWTITLHKIFAAIAMGIALL) traverse the membrane as a helical segment. The Cytoplasmic portion of the chain corresponds to 225 to 235 (RMIPDRPLFSS). A helical transmembrane segment spans residues 236–256 (ITYSFAFAISSPIGVAIGIVI). Over 257 to 262 (DATTQG) the chain is Extracellular. A helical transmembrane segment spans residues 263–283 (SIADWIFALSMSLACGVFVYV). Residues 284–305 (SVNHLLAKGYRPNKKVHVDEPR) are Cytoplasmic-facing. A helical membrane pass occupies residues 306 to 326 (YKFLAVLFGVVVIAIVMIWDT).

Belongs to the ZIP transporter (TC 2.A.5) family.

The protein resides in the cell membrane. In terms of biological role, probably mediates zinc uptake from the rhizosphere. The protein is Zinc transporter 11 (ZIP11) of Arabidopsis thaliana (Mouse-ear cress).